Here is a 316-residue protein sequence, read N- to C-terminus: Probable cell division protein WhiA (316 aa).

The segment at residues 275 to 309 is a DNA-binding region (H-T-H motif); the sequence is TLKELGEMVSGGKISKSGINHRLRKIDEIAEKLRA.

The protein belongs to the WhiA family.

In terms of biological role, involved in cell division and chromosome segregation. In Bacillus cytotoxicus (strain DSM 22905 / CIP 110041 / 391-98 / NVH 391-98), this protein is Probable cell division protein WhiA.